Reading from the N-terminus, the 338-residue chain is Ketol-acid reductoisomerase (NADP(+)) (338 aa).

Residues 1–181 (MQIFYDKDCD…GGGRTGIIET (181 aa)) enclose the KARI N-terminal Rossmann domain. Residues 24–27 (YGSQ), Arg47, Ser50, Ser52, and 82–85 (DEFQ) each bind NADP(+). The active site involves His107. Residue Gly133 participates in NADP(+) binding. The KARI C-terminal knotted domain occupies 182 to 327 (SFREETETDL…AKLRAMMPWI (146 aa)). Residues Asp190, Glu194, Glu226, and Glu230 each contribute to the Mg(2+) site. Ser251 is a binding site for substrate.

Belongs to the ketol-acid reductoisomerase family. It depends on Mg(2+) as a cofactor.

The enzyme catalyses (2R)-2,3-dihydroxy-3-methylbutanoate + NADP(+) = (2S)-2-acetolactate + NADPH + H(+). It catalyses the reaction (2R,3R)-2,3-dihydroxy-3-methylpentanoate + NADP(+) = (S)-2-ethyl-2-hydroxy-3-oxobutanoate + NADPH + H(+). It participates in amino-acid biosynthesis; L-isoleucine biosynthesis; L-isoleucine from 2-oxobutanoate: step 2/4. Its pathway is amino-acid biosynthesis; L-valine biosynthesis; L-valine from pyruvate: step 2/4. In terms of biological role, involved in the biosynthesis of branched-chain amino acids (BCAA). Catalyzes an alkyl-migration followed by a ketol-acid reduction of (S)-2-acetolactate (S2AL) to yield (R)-2,3-dihydroxy-isovalerate. In the isomerase reaction, S2AL is rearranged via a Mg-dependent methyl migration to produce 3-hydroxy-3-methyl-2-ketobutyrate (HMKB). In the reductase reaction, this 2-ketoacid undergoes a metal-dependent reduction by NADPH to yield (R)-2,3-dihydroxy-isovalerate. This is Ketol-acid reductoisomerase (NADP(+)) from Acinetobacter baumannii (strain AB0057).